The primary structure comprises 850 residues: AdoMet-dependent rRNA methyltransferase SPB1 (850 aa).

Glycine 58, tryptophan 60, aspartate 78, aspartate 94, and aspartate 119 together coordinate S-adenosyl-L-methionine. Lysine 159 serves as the catalytic Proton acceptor. Polar residues predominate over residues 273 to 282; sequence GETNEMTWTP. Disordered regions lie at residues 273–305, 388–414, 529–569, and 620–646; these read GETN…ARDE, IDKE…NEMK, GISD…RTLN, and AKKN…KQDD. Positions 388 to 400 are enriched in basic and acidic residues; the sequence is IDKELSELGEREK. Positions 397–425 form a coiled coil; that stretch reads EREKARKKRERRRRNEMKQREIQRMQMNM. A compositionally biased stretch (basic residues) spans 401–411; it reads ARKKRERRRRN. Composition is skewed to acidic residues over residues 537–561 and 628–638; these read DESD…DEDD and SDSEDEEDDIV. Positions 746-773 form a coiled coil; that stretch reads LEAKGRKKMRALRRLEQMKKKSELINED. A disordered region spans residues 811–850; the sequence is KNKGIAGRPRGVTGKYKMVDGTMKKEQRAIRRIKKKMGKK. The segment covering 840-850 has biased composition (basic residues); the sequence is IRRIKKKMGKK.

This sequence belongs to the class I-like SAM-binding methyltransferase superfamily. RNA methyltransferase RlmE family. SPB1 subfamily. In terms of assembly, component of the nucleolar and nucleoplasmic pre-60S ribosomal particle.

The protein resides in the nucleus. Its subcellular location is the nucleolus. The enzyme catalyses a ribonucleotide in rRNA + S-adenosyl-L-methionine = a 2'-O-methylribonucleotide in rRNA + S-adenosyl-L-homocysteine + H(+). In terms of biological role, required for proper assembly of pre-ribosomal particles during the biogenesis of the 60S ribosomal subunit. The sequence is that of AdoMet-dependent rRNA methyltransferase SPB1 from Yarrowia lipolytica (strain CLIB 122 / E 150) (Yeast).